The following is a 175-amino-acid chain: NADH-ubiquinone oxidoreductase chain 6 (175 aa).

The next 6 membrane-spanning stretches (helical) occupy residues 1–21, 24–44, 51–71, 87–107, 112–132, and 148–168; these read MMYIVFIMSVLYVVGFIGFSS, SPVYGGMSLVVSGGLGCGIIM, LGLVVFLVYLGGMMVVFGYTI, VVLSAFLVGLLMEVFMVVWLF, ELVGFYFGGLESFVTLGEGGF, and CGFWFLAMAGWMLFVSIFIAT.

It belongs to the complex I subunit 6 family. Core subunit of respiratory chain NADH dehydrogenase (Complex I) which is composed of 45 different subunits.

It is found in the mitochondrion inner membrane. The catalysed reaction is a ubiquinone + NADH + 5 H(+)(in) = a ubiquinol + NAD(+) + 4 H(+)(out). Its function is as follows. Core subunit of the mitochondrial membrane respiratory chain NADH dehydrogenase (Complex I) which catalyzes electron transfer from NADH through the respiratory chain, using ubiquinone as an electron acceptor. Essential for the catalytic activity and assembly of complex I. This is NADH-ubiquinone oxidoreductase chain 6 (MT-ND6) from Elephas maximus (Indian elephant).